The chain runs to 367 residues: Undecaprenyl-phosphate alpha-N-acetylglucosaminyl 1-phosphate transferase (367 aa).

9 helical membrane-spanning segments follow: residues 3–23 (LLTALSELISIFLFTTIFIFL), 45–65 (GVIPLVGGISVFAGICFMFGL), 69–89 (YIPHLSLYLICAGVLVFVGAM), 129–149 (WELVLGPFGYFLTLFAVWAAI), 158–178 (IDGLLGGLSSVSFAAMGLILW), 187–207 (MWCFAMIAAILPYIMLNLGIL), 213–233 (VFMGDAGSTLIGFTVIWLLLE), 242–262 (ISPVTALWIIAIPLMDMVAIM), and 318–338 (VPEWVMLVLFLLAFFLYGYCI).

The protein belongs to the glycosyltransferase 4 family. WecA subfamily. Mg(2+) serves as cofactor. Requires Mn(2+) as cofactor.

It localises to the cell inner membrane. The catalysed reaction is di-trans,octa-cis-undecaprenyl phosphate + UDP-N-acetyl-alpha-D-glucosamine = N-acetyl-alpha-D-glucosaminyl-di-trans,octa-cis-undecaprenyl diphosphate + UMP. The protein operates within bacterial outer membrane biogenesis; LPS O-antigen biosynthesis. It functions in the pathway bacterial outer membrane biogenesis; enterobacterial common antigen biosynthesis. Catalyzes the transfer of the GlcNAc-1-phosphate moiety from UDP-GlcNAc onto the carrier lipid undecaprenyl phosphate (C55-P), yielding GlcNAc-pyrophosphoryl-undecaprenyl (GlcNAc-PP-C55). The sequence is that of Undecaprenyl-phosphate alpha-N-acetylglucosaminyl 1-phosphate transferase from Salmonella typhi.